The primary structure comprises 289 residues: Acetyl-coenzyme A carboxylase carboxyl transferase subunit beta (289 aa).

The region spanning 23–289 is the CoA carboxyltransferase N-terminal domain; sequence HWIKCPSCSA…YDENPCLLHL (267 aa). The Zn(2+) site is built by Cys-27, Cys-30, Cys-46, and Cys-49. The C4-type zinc finger occupies 27–49; it reads CPSCSALMYYKEVIAQHHVCPKC.

Belongs to the AccD/PCCB family. Acetyl-CoA carboxylase is a heterohexamer composed of biotin carboxyl carrier protein (AccB), biotin carboxylase (AccC) and two subunits each of ACCase subunit alpha (AccA) and ACCase subunit beta (AccD). Zn(2+) serves as cofactor.

It localises to the cytoplasm. It carries out the reaction N(6)-carboxybiotinyl-L-lysyl-[protein] + acetyl-CoA = N(6)-biotinyl-L-lysyl-[protein] + malonyl-CoA. The protein operates within lipid metabolism; malonyl-CoA biosynthesis; malonyl-CoA from acetyl-CoA: step 1/1. Component of the acetyl coenzyme A carboxylase (ACC) complex. Biotin carboxylase (BC) catalyzes the carboxylation of biotin on its carrier protein (BCCP) and then the CO(2) group is transferred by the transcarboxylase to acetyl-CoA to form malonyl-CoA. The chain is Acetyl-coenzyme A carboxylase carboxyl transferase subunit beta from Wolinella succinogenes (strain ATCC 29543 / DSM 1740 / CCUG 13145 / JCM 31913 / LMG 7466 / NCTC 11488 / FDC 602W) (Vibrio succinogenes).